The primary structure comprises 214 residues: Small ribosomal subunit protein eS1 (214 aa).

The protein belongs to the eukaryotic ribosomal protein eS1 family.

This Aeropyrum pernix (strain ATCC 700893 / DSM 11879 / JCM 9820 / NBRC 100138 / K1) protein is Small ribosomal subunit protein eS1.